The chain runs to 136 residues: Inner membrane protein YbhQ (136 aa).

Residues 1-12 are Cytoplasmic-facing; it reads MKWQQRVRVATG. A helical membrane pass occupies residues 13-33; sequence LSCWQIMLHLLVVALLVVGWM. At 34–37 the chain is on the periplasmic side; sequence SKTL. Residues 38 to 58 traverse the membrane as a helical segment; the sequence is VHVGVGLCALYCVTVVMMLVF. At 59–71 the chain is on the cytoplasmic side; that stretch reads QRHPEQRWREVAD. Residues 72-92 form a helical membrane-spanning segment; sequence VLEELTTTWYFGAALIVLWLL. Topologically, residues 93 to 99 are periplasmic; sequence SRVLENN. A helical membrane pass occupies residues 100–120; sequence FLLAIAGLAILAGPAVVSLLA. Over 121–136 the chain is Cytoplasmic; it reads KDKKLHHLTSKHRVRR.

It is found in the cell inner membrane. The polypeptide is Inner membrane protein YbhQ (ybhQ) (Escherichia coli O157:H7).